Reading from the N-terminus, the 234-residue chain is Glucosamine-6-phosphate deaminase (234 aa).

D62 acts as the Proton acceptor; for enolization step in catalysis. The For ring-opening step role is filled by N128. The active-site Proton acceptor; for ring-opening step is H130. E135 acts as the For ring-opening step in catalysis.

Belongs to the glucosamine/galactosamine-6-phosphate isomerase family. NagB subfamily.

It carries out the reaction alpha-D-glucosamine 6-phosphate + H2O = beta-D-fructose 6-phosphate + NH4(+). The protein operates within amino-sugar metabolism; N-acetylneuraminate degradation; D-fructose 6-phosphate from N-acetylneuraminate: step 5/5. In terms of biological role, catalyzes the reversible isomerization-deamination of glucosamine 6-phosphate (GlcN6P) to form fructose 6-phosphate (Fru6P) and ammonium ion. This Ligilactobacillus salivarius (strain UCC118) (Lactobacillus salivarius) protein is Glucosamine-6-phosphate deaminase.